The chain runs to 151 residues: Abdominal ganglion neuropeptide L11 (151 aa).

Positions 1–25 (MPCTPNSHRLLLVTALCLLITSLFA) are cleaved as a signal peptide.

It is found in the secreted. The polypeptide is Abdominal ganglion neuropeptide L11 (Aplysia californica (California sea hare)).